We begin with the raw amino-acid sequence, 374 residues long: tRNA-specific 2-thiouridylase MnmA (374 aa).

ATP-binding positions include 12–19 and Met-38; that span reads GMSGGVDS. The segment at 98 to 100 is interaction with target base in tRNA; it reads NPD. The active-site Nucleophile is the Cys-103. Cys-103 and Cys-200 are oxidised to a cystine. Gly-127 lines the ATP pocket. Positions 150-152 are interaction with tRNA; that stretch reads KDQ. Cys-200 (cysteine persulfide intermediate) is an active-site residue. Residues 311-312 form an interaction with tRNA region; the sequence is RY.

The protein belongs to the MnmA/TRMU family.

It localises to the cytoplasm. It catalyses the reaction S-sulfanyl-L-cysteinyl-[protein] + uridine(34) in tRNA + AH2 + ATP = 2-thiouridine(34) in tRNA + L-cysteinyl-[protein] + A + AMP + diphosphate + H(+). Catalyzes the 2-thiolation of uridine at the wobble position (U34) of tRNA, leading to the formation of s(2)U34. The protein is tRNA-specific 2-thiouridylase MnmA of Lactiplantibacillus plantarum (strain ATCC BAA-793 / NCIMB 8826 / WCFS1) (Lactobacillus plantarum).